The sequence spans 344 residues: Heat-inducible transcription repressor HrcA (344 aa).

The protein belongs to the HrcA family.

In terms of biological role, negative regulator of class I heat shock genes (grpE-dnaK-dnaJ and groELS operons). Prevents heat-shock induction of these operons. The chain is Heat-inducible transcription repressor HrcA from Aster yellows witches'-broom phytoplasma (strain AYWB).